Here is a 404-residue protein sequence, read N- to C-terminus: Cysteine desulfurase IscS (404 aa).

Pyridoxal 5'-phosphate is bound by residues 75–76 (AT), Asn155, Gln183, and 203–205 (SAH). Residue Lys206 is modified to N6-(pyridoxal phosphate)lysine. Residue Thr243 participates in pyridoxal 5'-phosphate binding. Residue Cys328 is the Cysteine persulfide intermediate of the active site. Cys328 provides a ligand contact to [2Fe-2S] cluster.

It belongs to the class-V pyridoxal-phosphate-dependent aminotransferase family. NifS/IscS subfamily. As to quaternary structure, homodimer. Forms a heterotetramer with IscU, interacts with other sulfur acceptors. The cofactor is pyridoxal 5'-phosphate.

Its subcellular location is the cytoplasm. It carries out the reaction (sulfur carrier)-H + L-cysteine = (sulfur carrier)-SH + L-alanine. Its pathway is cofactor biosynthesis; iron-sulfur cluster biosynthesis. In terms of biological role, master enzyme that delivers sulfur to a number of partners involved in Fe-S cluster assembly, tRNA modification or cofactor biosynthesis. Catalyzes the removal of elemental sulfur atoms from cysteine to produce alanine. Functions as a sulfur delivery protein for Fe-S cluster synthesis onto IscU, an Fe-S scaffold assembly protein, as well as other S acceptor proteins. The sequence is that of Cysteine desulfurase IscS from Buchnera aphidicola subsp. Schizaphis graminum (strain Sg).